A 350-amino-acid polypeptide reads, in one-letter code: Small ribosomal subunit biogenesis GTPase RsgA (350 aa).

Residues 1 to 17 (MSKNKLSKGQQRRVNAN) show a composition bias toward polar residues. The disordered stretch occupies residues 1–27 (MSKNKLSKGQQRRVNANHQRRLKTSAE). The CP-type G domain occupies 104–273 (TSVLTRPDFY…VIDSPGVREF (170 aa)). GTP contacts are provided by residues 160–163 (NKID) and 214–222 (GQSGVGKSS). The Zn(2+) site is built by Cys297, Cys302, His304, and Cys310.

It belongs to the TRAFAC class YlqF/YawG GTPase family. RsgA subfamily. Monomer. Associates with 30S ribosomal subunit, binds 16S rRNA. Zn(2+) serves as cofactor.

It is found in the cytoplasm. Functionally, one of several proteins that assist in the late maturation steps of the functional core of the 30S ribosomal subunit. Helps release RbfA from mature subunits. May play a role in the assembly of ribosomal proteins into the subunit. Circularly permuted GTPase that catalyzes slow GTP hydrolysis, GTPase activity is stimulated by the 30S ribosomal subunit. This Salmonella dublin (strain CT_02021853) protein is Small ribosomal subunit biogenesis GTPase RsgA.